A 217-amino-acid polypeptide reads, in one-letter code: Flagellin B2 (217 aa).

A propeptide spanning residues 1 to 12 is cleaved from the precursor; it reads MKVFEFLKGKRG.

It belongs to the archaeal flagellin family.

It is found in the archaeal flagellum. Flagellin is the subunit protein which polymerizes to form the filaments of archaeal flagella. The polypeptide is Flagellin B2 (flaB2) (Methanocaldococcus jannaschii (strain ATCC 43067 / DSM 2661 / JAL-1 / JCM 10045 / NBRC 100440) (Methanococcus jannaschii)).